The chain runs to 356 residues: S-adenosylmethionine:tRNA ribosyltransferase-isomerase (356 aa).

Belongs to the QueA family. Monomer.

It is found in the cytoplasm. The enzyme catalyses 7-aminomethyl-7-carbaguanosine(34) in tRNA + S-adenosyl-L-methionine = epoxyqueuosine(34) in tRNA + adenine + L-methionine + 2 H(+). The protein operates within tRNA modification; tRNA-queuosine biosynthesis. Functionally, transfers and isomerizes the ribose moiety from AdoMet to the 7-aminomethyl group of 7-deazaguanine (preQ1-tRNA) to give epoxyqueuosine (oQ-tRNA). The chain is S-adenosylmethionine:tRNA ribosyltransferase-isomerase from Escherichia coli O8 (strain IAI1).